The following is a 246-amino-acid chain: NAD(P)H-hydrate epimerase (246 aa).

A YjeF N-terminal domain is found at 12–234 (AAEIDKELMG…DFANKFGFEP (223 aa)). 69–73 (NNGGD) is a binding site for (6S)-NADPHX. K(+) is bound by residues asparagine 70 and aspartate 138. (6S)-NADPHX contacts are provided by residues 142-148 (GFSFKPP) and aspartate 173. A K(+)-binding site is contributed by threonine 176.

The protein belongs to the NnrE/AIBP family. K(+) is required as a cofactor.

The protein resides in the cytoplasm. It is found in the mitochondrion. The catalysed reaction is (6R)-NADHX = (6S)-NADHX. The enzyme catalyses (6R)-NADPHX = (6S)-NADPHX. Its function is as follows. Catalyzes the epimerization of the S- and R-forms of NAD(P)HX, a damaged form of NAD(P)H that is a result of enzymatic or heat-dependent hydration. This is a prerequisite for the S-specific NAD(P)H-hydrate dehydratase to allow the repair of both epimers of NAD(P)HX. The chain is NAD(P)H-hydrate epimerase from Saccharomyces cerevisiae (strain ATCC 204508 / S288c) (Baker's yeast).